Here is a 693-residue protein sequence, read N- to C-terminus: Translation factor GUF1 homolog, chloroplastic (693 aa).

A chloroplast-targeting transit peptide spans 1 to 51 (MATDLSSSSTLLLSRNCKTPPFYHTTNSLSLSKTHHLYASRNAVVSRLRLL). The tr-type G domain maps to 86 to 267 (SNIRNFCIIA…AIVERIPSPR (182 aa)). GTP-binding positions include 95 to 102 (AHIDHGKS), 160 to 164 (DTPGH), and 214 to 217 (NKID).

This sequence belongs to the TRAFAC class translation factor GTPase superfamily. Classic translation factor GTPase family. LepA subfamily.

The protein resides in the plastid. The protein localises to the chloroplast. The catalysed reaction is GTP + H2O = GDP + phosphate + H(+). Functionally, promotes chloroplast protein synthesis. May act as a fidelity factor of the translation reaction, by catalyzing a one-codon backward translocation of tRNAs on improperly translocated ribosomes. The chain is Translation factor GUF1 homolog, chloroplastic from Ricinus communis (Castor bean).